The following is a 31-amino-acid chain: Photosystem II reaction center protein T (31 aa).

A helical transmembrane segment spans residues 3 to 23 (SVAYIVVLTMALAVLFFAIAF).

This sequence belongs to the PsbT family. As to quaternary structure, PSII is composed of 1 copy each of membrane proteins PsbA, PsbB, PsbC, PsbD, PsbE, PsbF, PsbH, PsbI, PsbJ, PsbK, PsbL, PsbM, PsbT, PsbX, PsbY, PsbZ, Psb30/Ycf12, peripheral proteins PsbO, CyanoQ (PsbQ), PsbU, PsbV and a large number of cofactors. It forms dimeric complexes.

Its subcellular location is the cellular thylakoid membrane. In terms of biological role, found at the monomer-monomer interface of the photosystem II (PS II) dimer, plays a role in assembly and dimerization of PSII. PSII is a light-driven water plastoquinone oxidoreductase, using light energy to abstract electrons from H(2)O, generating a proton gradient subsequently used for ATP formation. This is Photosystem II reaction center protein T from Crocosphaera subtropica (strain ATCC 51142 / BH68) (Cyanothece sp. (strain ATCC 51142)).